Consider the following 431-residue polypeptide: MDALQLVSNRSETDVPALMHALGQQARASAHALSLASTEAKNLALRVAAEQLRKRTQDLLLANARDLEGAKAQDANAAFLDRLTLDDKRIEAIARGLDEIAALPDPVGRMLARYERPNGLVIERVATPLGVIGIIYESRPAVTADAGALCLKAGNAAILRGGSESFFSATIIHACLTEGLRAAGLPEAAVSLVPTRDRAAVGEMLKGLDGTIDVIVPRGGKSLVARVQAEARVPVFAHLEGVNHIFVHRAADLEKAAIIIRNAKLRRPGVCGAAEILLVDEACMATHLAPLTRMLLDAGCAIRGDAATQTIDPRVTAAMESDWRTEYSDAIIAVRVIDGLNKAIAHIETHGSHHTDCIITEDQEAADRFLAEVDSAIVMHNASTQFADGGEFGFGAEIGIATGRLHARGPVGLEQLTSFKYRVHGNGQIRP.

Belongs to the gamma-glutamyl phosphate reductase family.

It localises to the cytoplasm. The enzyme catalyses L-glutamate 5-semialdehyde + phosphate + NADP(+) = L-glutamyl 5-phosphate + NADPH + H(+). It functions in the pathway amino-acid biosynthesis; L-proline biosynthesis; L-glutamate 5-semialdehyde from L-glutamate: step 2/2. Its function is as follows. Catalyzes the NADPH-dependent reduction of L-glutamate 5-phosphate into L-glutamate 5-semialdehyde and phosphate. The product spontaneously undergoes cyclization to form 1-pyrroline-5-carboxylate. The sequence is that of Gamma-glutamyl phosphate reductase from Beijerinckia indica subsp. indica (strain ATCC 9039 / DSM 1715 / NCIMB 8712).